Consider the following 227-residue polypeptide: DnaJ homolog subfamily B member 8 (227 aa).

The J domain occupies 3 to 69 (NYYEVLGVQS…KKRSVYDRAG (67 aa)).

In terms of assembly, interacts with histone deacetylases HDAC4, HDAC6, and SIRT2, HDAC activity is required for antiaggregation.

Functionally, efficient suppressor of aggregation and toxicity of disease-associated polyglutamine proteins. This chain is DnaJ homolog subfamily B member 8 (Dnajb8), found in Mus musculus (Mouse).